A 343-amino-acid polypeptide reads, in one-letter code: Serpentine receptor class alpha-11 (343 aa).

At 1 to 24 the chain is on the extracellular side; that stretch reads MSSPDTPVCASPQQMEMYNSHFYT. A helical transmembrane segment spans residues 25 to 45; that stretch reads CALFFNLLIAFTSMTLIIMAI. Over 46 to 60 the chain is Cytoplasmic; that stretch reads RKLLTESIINTSTRM. A helical membrane pass occupies residues 61 to 81; that stretch reads FLIVGLLCCSLHQTAYIVLRV. The Extracellular portion of the chain corresponds to 82 to 106; sequence QVIFQILFKLDQPCKLYYKAYDCKY. Residues 107–127 traverse the membrane as a helical segment; it reads VTFSLVAGNTGMIFIQSAMTI. Topologically, residues 128–146 are cytoplasmic; that stretch reads DRILTTVFTNLWPKLKYWP. The chain crosses the membrane as a helical span at residues 147–167; sequence GVILSSFMIGCNFTNVQFIFW. The Extracellular segment spans residues 168-192; that stretch reads NDPLTDYVPTCGQFPPKSVGRFQKF. The chain crosses the membrane as a helical span at residues 193–213; it reads LEIALYMSLAHMVINVIILYI. The Cytoplasmic segment spans residues 214 to 247; sequence NVVQDRRQRLVSTHDQSQSFDVNQRFQSRVALKS. Residues 248-268 traverse the membrane as a helical segment; sequence TQAIFFLSMSQFLSCFLYTIF. The Extracellular segment spans residues 269–291; sequence TKLYLTLQPDMTPLQSGLTLALT. The helical transmembrane segment at 292-312 threads the bilayer; sequence YTTPYACIAIPSLIMVTLTFI. The Cytoplasmic portion of the chain corresponds to 313–343; sequence RNQRHRSINALRSQTETGDQYMQKIKKIWDK.

Belongs to the nematode receptor-like protein sra family.

It localises to the membrane. Functionally, a G protein-coupled receptor required for olfactory imprinting a requisite in ordorant response such as benzaldehyde and isoamylalcohol. The sequence is that of Serpentine receptor class alpha-11 from Caenorhabditis briggsae.